The following is a 366-amino-acid chain: MDAVGFAKYPFTQEALSYVRDRNYSMEDILQKPAYGQVRLRAKKRVLNSIKGDVQADDLLPDPERELLSYPVARMLVAMTEDQYLMKRFALWESKRAYTLLLDESDTGLMDVGRDFGITARAKDREFIIHFTDYLRYAAGLRNLEWKLINRKVVAGMVYVSRETFTRLLEEAVREKIQAGFGAKVPAEMKPVLEPYLAEIRESLDKLKSEKGLSGDGEVTQDSFPPCMKNLLADLQKGINLPHTARFALTSFLANIGLDKDAIMDLYRMAPDFREDLTHYQVQHITGGSGTEYTCPGCKTMMTYGNCIGKNKLCEYVTHPLSYYRKSQRRRAKEMAAAQAFKGSKDKAVDTVAENVHVETGNSPGN.

Positions 227, 298, 307, and 314 each coordinate [4Fe-4S] cluster.

It belongs to the eukaryotic-type primase large subunit family. As to quaternary structure, heterodimer of a small subunit (PriS) and a large subunit (PriL). [4Fe-4S] cluster is required as a cofactor.

Its function is as follows. Regulatory subunit of DNA primase, an RNA polymerase that catalyzes the synthesis of short RNA molecules used as primers for DNA polymerase during DNA replication. Stabilizes and modulates the activity of the small subunit, increasing the rate of DNA synthesis, and conferring RNA synthesis capability. The DNA polymerase activity may enable DNA primase to also catalyze primer extension after primer synthesis. May also play a role in DNA repair. In Methanocella arvoryzae (strain DSM 22066 / NBRC 105507 / MRE50), this protein is DNA primase large subunit PriL.